We begin with the raw amino-acid sequence, 96 residues long: Large ribosomal subunit protein bL27 (96 aa).

The segment at 12–33 (HKGGGSSANGRNSAGRRLGAKA) is disordered. Residues 19–28 (ANGRNSAGRR) are compositionally biased toward low complexity.

It belongs to the bacterial ribosomal protein bL27 family.

This chain is Large ribosomal subunit protein bL27, found in Lactobacillus helveticus (strain DPC 4571).